The chain runs to 631 residues: NADPH oxidoreductase A (631 aa).

Residues I73–C212 form the Flavodoxin-like domain. FMN-binding positions include T79–L83 and V160–R191. An FAD-binding FR-type domain is found at K247–P480. P249–S299 contacts FAD. Q504 to W630 is a binding site for NADP(+).

FAD serves as cofactor. Requires FMN as cofactor.

Its function is as follows. Probable NADPH oxidoreductase that controls development beyond the mound stage. In Dictyostelium discoideum (Social amoeba), this protein is NADPH oxidoreductase A (redA).